Here is a 421-residue protein sequence, read N- to C-terminus: Histidine--tRNA ligase (421 aa).

It belongs to the class-II aminoacyl-tRNA synthetase family. Homodimer.

The protein resides in the cytoplasm. The catalysed reaction is tRNA(His) + L-histidine + ATP = L-histidyl-tRNA(His) + AMP + diphosphate + H(+). The protein is Histidine--tRNA ligase of Solidesulfovibrio magneticus (strain ATCC 700980 / DSM 13731 / RS-1) (Desulfovibrio magneticus).